We begin with the raw amino-acid sequence, 1996 residues long: Protein Shroom3 (1996 aa).

The PDZ domain occupies 25–110; it reads YIYLEAFLEG…TLRLVVRRDV (86 aa). Residues 150–173 are disordered; the sequence is KHRRSEPAGRPHSWHTTKSGEKQP. The residue at position 213 (Ser213) is a Phosphoserine. Disordered regions lie at residues 340-389, 437-468, 568-629, 673-772, and 788-1053; these read NGQG…PARS, EKSP…TSIY, DASL…WEGD, RRHS…LQGF, and FEQR…PESS. Phosphoserine occurs at positions 439 and 443. Basic and acidic residues predominate over residues 700 to 718; it reads KAEDPGRKAAPDLGSHLDR. A compositionally biased stretch (low complexity) spans 750 to 768; the sequence is HPHTSSLGRRGPGPGSASA. Over residues 814 to 823 the composition is skewed to polar residues; it reads TVSTSSTSGN. Ser816 carries the phosphoserine modification. Composition is skewed to basic and acidic residues over residues 826-836 and 846-859; these read EETKAHIRFSE and QHFK…EEAS. Polar residues-rich tracts occupy residues 862-871 and 887-896; these read PCGQQLSGGA and RSQSTFQLSS. Ser890 bears the Phosphoserine mark. Basic and acidic residues predominate over residues 897 to 909; that stretch reads EPEREPEWRDRPG. 2 positions are modified to phosphoserine: Ser910 and Ser913. An ASD1 domain is found at 928 to 1030; it reads IKDAQSRVLG…SEPEKMNEVG (103 aa). Residues 950-964 show a composition bias toward low complexity; the sequence is APVASRSWRPRPSSA. Phosphoserine is present on Ser970. Residues 1011-1027 are compositionally biased toward basic and acidic residues; that stretch reads LTPEQKKRSYSEPEKMN. Phosphoserine occurs at positions 1069 and 1072. Disordered regions lie at residues 1093–1115, 1137–1223, 1315–1573, and 1627–1665; these read KTGK…LRER, SSLS…MSAE, ECPG…SFNK, and SLGG…SSED. The span at 1137–1148 shows a compositional bias: low complexity; that stretch reads SSLSSLREPSLQ. Residue Ser1221 is modified to Phosphoserine. Over residues 1366-1375 the composition is skewed to polar residues; it reads YCSQDGQTGR. A compositionally biased stretch (basic and acidic residues) spans 1403-1417; the sequence is CEGDGPEHGVEEGTR. Residue Ser1441 is modified to Phosphoserine. Positions 1459–1472 are enriched in polar residues; that stretch reads KQQSLPSLCSTSDP. A compositionally biased stretch (basic and acidic residues) spans 1498–1515; it reads PPPHEDYEDEVFVRDPHP. Residues 1524–1536 show a composition bias toward pro residues; that stretch reads EPLPPPPPPPPSQ. Over residues 1634-1649 the composition is skewed to polar residues; that stretch reads PIQTQSLSHDPVSGTQ. Residues 1651 to 1665 show a composition bias toward basic and acidic residues; that stretch reads LEKKVSPDPQKSSED. The 289-residue stretch at 1669–1957 folds into the ASD2 domain; the sequence is EALAKEIVHQ…QVKCLLESLP (289 aa).

It belongs to the shroom family. As to quaternary structure, interacts with F-actin. Interacts with ROCK1.

The protein localises to the cell junction. It localises to the adherens junction. The protein resides in the cytoplasm. It is found in the cytoskeleton. Its subcellular location is the apical cell membrane. In terms of biological role, controls cell shape changes in the neuroepithelium during neural tube closure. Induces apical constriction in epithelial cells by promoting the apical accumulation of F-actin and myosin II, and probably by bundling stress fibers. Induces apicobasal cell elongation by redistributing gamma-tubulin and directing the assembly of robust apicobasal microtubule arrays. This Homo sapiens (Human) protein is Protein Shroom3 (SHROOM3).